The sequence spans 649 residues: MNIPIYQVPSVTMQSLHQQSLYQQTYLDRNRMVTDVFVQEHVSQSSWSMAGSSAVFIPGPIITGSAHGHCHHTATVSTVSPQLATFMPFPGMQYYAASSATMNAYGHNQMYSTRASASVGFYLPQYHASCSHEQPKKTFCAAQTQTQQTAKTSCDVGTQVDLDAEELRSEARKPRPESVVPEESSISSLESGAGDGFRVQKKLRNSEVKLLDQRLHDITRVSLHGSEIAERLANAHRNRPCFKKIDTLCARLKQDLLRPDGVLPNINSQGIAWAVKDFIFVFTRIVNAWVILKGYVYNTPDALNKIKDELPSGFMASFDSWQISTLSIVKMIVKSFVNLDELLQKQKNSFSGKDGAPINQSNSISLRSFIDSNDSSGLAQKYLGMTTGHGPSAFSTPNNQIRNNAASKGQEPTSSALYKPKCALNLNYLYTMIEDSEETQRHVDANGTYLKTGTYQPLQKESMQLEMPPAKPNDHYVERNANQQALPSQEIPNAPTPKSSPQSDRPRDVRSYTNPFSAIGKEVTRQLYEFSDRVMELKNLERFFKKQFTRNYYPNFYQHCQDDFIDVRAIILRCENSSYHHIYQAIHDLRRIIFTVRCYLQMYTDENLLYYIDLYERSVNDMLSKPPHYPNQFDHIMGRPGEKLFNYEI.

A compositionally biased stretch (basic and acidic residues) spans 167–176 (LRSEARKPRP). 3 disordered regions span residues 167 to 193 (LRSE…ESGA), 389 to 414 (HGPS…EPTS), and 485 to 512 (ALPS…VRSY). Low complexity predominate over residues 177 to 191 (ESVVPEESSISSLES). 2 stretches are compositionally biased toward polar residues: residues 393-414 (AFST…EPTS) and 485-503 (ALPS…SPQS).

Functionally, required for male meiotic cytokinesis through its involvement in the regulation of mitochondrial aggregation and fusion, astral spindle assembly and contractile ring formation. This Drosophila melanogaster (Fruit fly) protein is Protein mitoshell.